Consider the following 605-residue polypeptide: Alanine--tRNA ligase (605 aa).

Residues His-463, His-467, Cys-565, and His-569 each coordinate Zn(2+).

The protein belongs to the class-II aminoacyl-tRNA synthetase family. It depends on Zn(2+) as a cofactor.

The protein resides in the cytoplasm. It catalyses the reaction tRNA(Ala) + L-alanine + ATP = L-alanyl-tRNA(Ala) + AMP + diphosphate. In terms of biological role, catalyzes the attachment of alanine to tRNA(Ala) in a two-step reaction: alanine is first activated by ATP to form Ala-AMP and then transferred to the acceptor end of tRNA(Ala). Also edits incorrectly charged Ser-tRNA(Ala) and Gly-tRNA(Ala) via its editing domain. This is Alanine--tRNA ligase (alaS) from Treponema pallidum (strain Nichols).